A 588-amino-acid chain; its full sequence is Sulfite reductase [NADPH] hemoprotein beta-component (588 aa).

[4Fe-4S] cluster is bound by residues cysteine 443, cysteine 449, cysteine 488, and cysteine 492. Cysteine 492 lines the siroheme pocket.

It belongs to the nitrite and sulfite reductase 4Fe-4S domain family. Alpha(8)-beta(8). The alpha component is a flavoprotein, the beta component is a hemoprotein. Siroheme serves as cofactor. The cofactor is [4Fe-4S] cluster.

The catalysed reaction is hydrogen sulfide + 3 NADP(+) + 3 H2O = sulfite + 3 NADPH + 4 H(+). The protein operates within sulfur metabolism; hydrogen sulfide biosynthesis; hydrogen sulfide from sulfite (NADPH route): step 1/1. In terms of biological role, component of the sulfite reductase complex that catalyzes the 6-electron reduction of sulfite to sulfide. This is one of several activities required for the biosynthesis of L-cysteine from sulfate. This chain is Sulfite reductase [NADPH] hemoprotein beta-component, found in Actinobacillus succinogenes (strain ATCC 55618 / DSM 22257 / CCUG 43843 / 130Z).